Consider the following 1009-residue polypeptide: Rho GTPase-activating protein gacT (1009 aa).

2 disordered regions span residues 1–72 (MKNI…SRNH) and 89–117 (TSHH…QQTQ). The segment covering 12 to 23 (FHKDKKEGDKQD) has biased composition (basic and acidic residues). Residues 26–35 (GSSGSSGNSG) show a composition bias toward low complexity. Polar residues predominate over residues 58 to 69 (ESYSGDNSPTLS). Residues 89 to 103 (TSHHSHSHNHNHNHN) are compositionally biased toward basic residues. The span at 104 to 117 (HQLTQPIQQQQQTQ) shows a compositional bias: low complexity. One can recognise a Rho-GAP domain in the interval 163–351 (VPLTQVPCRA…EVFPQHHLYY (189 aa)). Disordered stretches follow at residues 388–420 (TISG…DSTA), 432–482 (PEQQ…TFRV), and 508–571 (GPSG…TTDQ). Composition is skewed to low complexity over residues 394–415 (PSNG…ITSP), 432–468 (PEQQ…QPIS), and 512–521 (TTGTTPNGGS). The segment covering 522–546 (LSIGGGNGGNGGSSLSVGSGGGNGG) has biased composition (gly residues). Low complexity predominate over residues 547-557 (SSLSVGSNTSV). Positions 580 to 656 (AYTNNEDTKA…IEREIEKKRL (77 aa)) form a coiled coil. The interval 686-713 (ISTIDGSGGSNRNSKNYGNGSSSSSNRR) is disordered. A compositionally biased stretch (low complexity) spans 695–713 (SNRNSKNYGNGSSSSSNRR). A coiled-coil region spans residues 715-743 (SNTINQQLQMQLQQLQIQQQQYQQTQQSQ). The tract at residues 759–781 (TTTTTTTSSGSNRFSSNRYKPVD) is disordered. Over residues 766–781 (SSGSNRFSSNRYKPVD) the composition is skewed to polar residues. Positions 839–952 (ENLVLLQQQY…IEEIHLLETY (114 aa)) form a coiled coil. A disordered region spans residues 965–1009 (STTKDLLTRSRSPTLPSSINMSTSSLGSSSSSAYNNNNNNNNVPK). Polar residues predominate over residues 967-980 (TKDLLTRSRSPTLP). Residues 981 to 1009 (SSINMSTSSLGSSSSSAYNNNNNNNNVPK) are compositionally biased toward low complexity.

Its subcellular location is the cytoplasm. Rho GTPase-activating protein involved in the signal transduction pathway. This Dictyostelium discoideum (Social amoeba) protein is Rho GTPase-activating protein gacT (gacT).